The sequence spans 169 residues: Disulfide bond formation protein B (169 aa).

At 1–8 (MRLSVRWV) the chain is on the cytoplasmic side. The chain crosses the membrane as a helical span at residues 9–25 (FFLGFFLCALMLAIAGY). The Periplasmic segment spans residues 26-43 (FQFVENLEPCPLCILSRV). A disulfide bridge connects residues C35 and C38. The helical transmembrane segment at 44-60 (AVLAIGGVFLVAALHNP) threads the bilayer. Over 61–67 (KSWGIKV) the chain is Cytoplasmic. A helical membrane pass occupies residues 68-84 (YALLGFVVTLIGIGITG). Over 85–141 (RHVWLQSLPADQVPACGPGLNFMLDNFPLTETLELVFRGSGECAEVQWSFLGLTIPG) the chain is Periplasmic. Cysteines 100 and 127 form a disulfide. A helical membrane pass occupies residues 142 to 160 (WTLVAFLFLGVISLWQMGR). At 161–169 (TGGGAGKLT) the chain is on the cytoplasmic side.

The protein belongs to the DsbB family.

The protein resides in the cell inner membrane. Its function is as follows. Required for disulfide bond formation in some periplasmic proteins. Acts by oxidizing the DsbA protein. The protein is Disulfide bond formation protein B of Nitrosococcus oceani (strain ATCC 19707 / BCRC 17464 / JCM 30415 / NCIMB 11848 / C-107).